We begin with the raw amino-acid sequence, 274 residues long: Diaminopimelate epimerase (274 aa).

The substrate site is built by asparagine 11, glutamine 44, and asparagine 64. Cysteine 73 serves as the catalytic Proton donor. Substrate contacts are provided by residues 74 to 75 (GN), asparagine 157, asparagine 190, and 208 to 209 (ER). The Proton acceptor role is filled by cysteine 217. Residue 218-219 (GS) participates in substrate binding.

This sequence belongs to the diaminopimelate epimerase family. In terms of assembly, homodimer.

Its subcellular location is the cytoplasm. It carries out the reaction (2S,6S)-2,6-diaminopimelate = meso-2,6-diaminopimelate. It functions in the pathway amino-acid biosynthesis; L-lysine biosynthesis via DAP pathway; DL-2,6-diaminopimelate from LL-2,6-diaminopimelate: step 1/1. Its function is as follows. Catalyzes the stereoinversion of LL-2,6-diaminopimelate (L,L-DAP) to meso-diaminopimelate (meso-DAP), a precursor of L-lysine and an essential component of the bacterial peptidoglycan. The sequence is that of Diaminopimelate epimerase from Enterobacter sp. (strain 638).